A 122-amino-acid polypeptide reads, in one-letter code: MTTLLGPITRRFLSATQIARSLTRAEVPGEQLDAKRARLLYQSKKRGILENDILLGNFAEENLKKMSEPELKAYDKLINGEHMEWDLFYYLSNKKTPPEDVEKCSVYQKVKKFVDEKRVPRS.

Belongs to the SDHAF2 family. Interacts with the flavoprotein subunit within the SDH catalytic dimer.

Its subcellular location is the mitochondrion matrix. Its function is as follows. Plays an essential role in the assembly of succinate dehydrogenase (SDH), an enzyme complex (also referred to as respiratory complex II) that is a component of both the tricarboxylic acid (TCA) cycle and the mitochondrial electron transport chain, and which couples the oxidation of succinate to fumarate with the reduction of ubiquinone (coenzyme Q) to ubiquinol. Required for flavinylation (covalent attachment of FAD) of the flavoprotein subunit of the SDH catalytic dimer. The sequence is that of Succinate dehydrogenase assembly factor 2, mitochondrial from Caenorhabditis briggsae.